The primary structure comprises 825 residues: MATQNDIPNSTPEDLAKQVEIAEKHPDPPAMPSRLPDSLKTLEAKIDTSKITDEEVANVHRFQRACDYLAASLIFLSNGLYTGGDLEEKDIKTRLLGHWGTCPGLSIVYSHCNRIINKYDLNMLFVVGPGHGAPAILSALFLEDSLGPFYPRYQFTKEGLNNLINTFSLPGGFPSHVNAEVPGAIHEGGELGYALSVSYGAVLDRPDLIVTCVVGDGEAETGPTATSWHAHKFLDPAESGAVIPVLELNGYKISERTIYGCMDDSELLSLFSGFGYEVAIVNDTPDQNRVMAATMDWAVERIHDIQHRARVNREEIKPRWPMIILRTPKGKGCPKYLNGKFLEGTFRAHQVPLKLARTDTNQRNLLKDWLNSYNCQDFLDEHGLPTKGITEHLPPREKRMGQRHETYNSYLPLKVPDWKKYGVKKGETTSATSVVGQYLDELLVTNDSTLRIFSPDELESNKLDGALKHSYRTMQTDPELMAKRGRVTEVLSEHLCQGFMQGYTLTGRTAIFPSYEAFMTIVVSMLVQYSKFLKMGLETGWHGKFGSLNYVTSSTWARQEHNGFSHQSPRFITTMLSLKPGVSRVYFPPDANCFLATVARCMKSENTINLMVSSKNPQPAYLSVEEAEHHCKAGASVWKFASTDNGENPDVVIAGVGNEIMFEVVKAAEMLQNDIPELRVRVINVTDLMVLSSLHPHGMNPAEFDSLFTKDRHVHFNYHGYVMDLKALLFDRIQGTRVTMEGYREEGTTTTPFNMMMCNNTSRYHVARMALQHALHNPTVAVNCNMLCAKYAWKLEEIENYIMENKDDPPEIYAAPVFKNKTSTL.

The protein belongs to the XFP family. Requires thiamine diphosphate as cofactor.

In Schizosaccharomyces pombe (strain 972 / ATCC 24843) (Fission yeast), this protein is Probable phosphoketolase.